Consider the following 89-residue polypeptide: MKGLFLVVFLMWFVSQMNTEETEEYVQFNVIEDPYPRLPRRNYSCSTMACPARHICGCMPTPITPETPYRDLDCGCYHEYDMMPVCEGL.

An N-terminal signal peptide occupies residues 1 to 22 (MKGLFLVVFLMWFVSQMNTEET).

It belongs to the scoloptoxin-12 family. Contains 3 disulfide bonds. In terms of tissue distribution, expressed by the venom gland.

Its subcellular location is the secreted. The protein is U-scoloptoxin(12)-Er1a of Ethmostigmus rubripes (Giant centipede).